A 239-amino-acid chain; its full sequence is tRNA (guanine-N(1)-)-methyltransferase (239 aa).

S-adenosyl-L-methionine-binding positions include Gly108 and 128–133; that span reads VGNFIV.

It belongs to the RNA methyltransferase TrmD family. In terms of assembly, homodimer.

The protein localises to the cytoplasm. It catalyses the reaction guanosine(37) in tRNA + S-adenosyl-L-methionine = N(1)-methylguanosine(37) in tRNA + S-adenosyl-L-homocysteine + H(+). Its function is as follows. Specifically methylates guanosine-37 in various tRNAs. The sequence is that of tRNA (guanine-N(1)-)-methyltransferase from Helicobacter hepaticus (strain ATCC 51449 / 3B1).